The primary structure comprises 210 residues: Small ribosomal subunit protein uS3 (210 aa).

The 70-residue stretch at 17–86 (IDEFLEKELR…NPQIEVEEIK (70 aa)) folds into the KH type-2 domain.

This sequence belongs to the universal ribosomal protein uS3 family. As to quaternary structure, part of the 30S ribosomal subunit.

In terms of biological role, binds the lower part of the 30S subunit head. The sequence is that of Small ribosomal subunit protein uS3 from Pyrococcus furiosus (strain ATCC 43587 / DSM 3638 / JCM 8422 / Vc1).